Consider the following 517-residue polypeptide: 2-isopropylmalate synthase (517 aa).

The Pyruvate carboxyltransferase domain occupies 4–266 (INFFDTTLRD…ESTIQLNEIK (263 aa)). Mn(2+) contacts are provided by aspartate 13, histidine 201, histidine 203, and asparagine 237. The regulatory domain stretch occupies residues 391-517 (EFESLQVHYG…IEIEKHHAIS (127 aa)).

This sequence belongs to the alpha-IPM synthase/homocitrate synthase family. LeuA type 1 subfamily. Homodimer. Requires Mn(2+) as cofactor.

The protein localises to the cytoplasm. The catalysed reaction is 3-methyl-2-oxobutanoate + acetyl-CoA + H2O = (2S)-2-isopropylmalate + CoA + H(+). It functions in the pathway amino-acid biosynthesis; L-leucine biosynthesis; L-leucine from 3-methyl-2-oxobutanoate: step 1/4. Its function is as follows. Catalyzes the condensation of the acetyl group of acetyl-CoA with 3-methyl-2-oxobutanoate (2-ketoisovalerate) to form 3-carboxy-3-hydroxy-4-methylpentanoate (2-isopropylmalate). The polypeptide is 2-isopropylmalate synthase (Bacillus pumilus (strain SAFR-032)).